Here is a 260-residue protein sequence, read N- to C-terminus: DNA repair protein RecO (260 aa).

Positions 239–260 (SAGVAAARKAGGDGSDGDEGEQ) are disordered.

This sequence belongs to the RecO family.

Functionally, involved in DNA repair and RecF pathway recombination. The polypeptide is DNA repair protein RecO (Sodalis glossinidius (strain morsitans)).